A 209-amino-acid polypeptide reads, in one-letter code: Putative 3-methyladenine DNA glycosylase (209 aa).

Positions 189 to 209 are disordered; the sequence is YISKTQPGPPPKKRKKGLESS. Positions 199–209 are enriched in basic residues; the sequence is PKKRKKGLESS.

This sequence belongs to the DNA glycosylase MPG family.

The polypeptide is Putative 3-methyladenine DNA glycosylase (Chlorobaculum tepidum (strain ATCC 49652 / DSM 12025 / NBRC 103806 / TLS) (Chlorobium tepidum)).